A 335-amino-acid chain; its full sequence is Homeobox protein DBX1 (335 aa).

2 disordered regions span residues 58–102 (IPAA…LSPA) and 240–335 (KERE…ITVS). Positions 83–95 (GSPGSGSRRGSSP) are enriched in low complexity. A DNA-binding region (homeobox) is located at residues 181-240 (GMLRRAVFSDVQRKALEKTFQKQKYISKPDRKKLASKLGLKDSQVKIWFQNRRMKWRNSK). Over residues 299-317 (GPLPASPAHSSSPGKPSDF) the composition is skewed to low complexity. Residues 318-335 (SDSDEDEEGEEDEEITVS) show a composition bias toward acidic residues.

Belongs to the H2.0 homeobox family.

The protein resides in the nucleus. In terms of biological role, could have a role in patterning the central nervous system during embryogenesis. Has a key role in regulating the distinct phenotypic features that distinguish two major classes of ventral interneurons, V0 and V1 neurons. Regulates the transcription factor profile, neurotransmitter phenotype, intraspinal migratory path and axonal trajectory of V0 neurons, features that differentiate them from an adjacent set of V1 neurons. The chain is Homeobox protein DBX1 (Dbx1) from Mus musculus (Mouse).